The primary structure comprises 61 residues: Small ribosomal subunit protein uS14 (61 aa).

Cys-24, Cys-27, Cys-40, and Cys-43 together coordinate Zn(2+).

It belongs to the universal ribosomal protein uS14 family. Zinc-binding uS14 subfamily. As to quaternary structure, part of the 30S ribosomal subunit. Contacts proteins S3 and S10. The cofactor is Zn(2+).

In terms of biological role, binds 16S rRNA, required for the assembly of 30S particles and may also be responsible for determining the conformation of the 16S rRNA at the A site. The chain is Small ribosomal subunit protein uS14 from Beutenbergia cavernae (strain ATCC BAA-8 / DSM 12333 / CCUG 43141 / JCM 11478 / NBRC 16432 / NCIMB 13614 / HKI 0122).